The primary structure comprises 220 residues: Ribosomal RNA large subunit methyltransferase E (220 aa).

Residues glycine 60, tryptophan 62, aspartate 92, aspartate 108, and aspartate 133 each coordinate S-adenosyl-L-methionine. Catalysis depends on lysine 173, which acts as the Proton acceptor.

It belongs to the class I-like SAM-binding methyltransferase superfamily. RNA methyltransferase RlmE family.

Its subcellular location is the cytoplasm. The enzyme catalyses uridine(2552) in 23S rRNA + S-adenosyl-L-methionine = 2'-O-methyluridine(2552) in 23S rRNA + S-adenosyl-L-homocysteine + H(+). Its function is as follows. Specifically methylates the uridine in position 2552 of 23S rRNA at the 2'-O position of the ribose in the fully assembled 50S ribosomal subunit. The polypeptide is Ribosomal RNA large subunit methyltransferase E (Burkholderia multivorans (strain ATCC 17616 / 249)).